The chain runs to 130 residues: Small ribosomal subunit protein uS11 (130 aa).

It belongs to the universal ribosomal protein uS11 family. As to quaternary structure, part of the 30S ribosomal subunit. Interacts with proteins S7 and S18. Binds to IF-3.

Functionally, located on the platform of the 30S subunit, it bridges several disparate RNA helices of the 16S rRNA. Forms part of the Shine-Dalgarno cleft in the 70S ribosome. The protein is Small ribosomal subunit protein uS11 of Campylobacter hominis (strain ATCC BAA-381 / DSM 21671 / CCUG 45161 / LMG 19568 / NCTC 13146 / CH001A).